Here is a 641-residue protein sequence, read N- to C-terminus: Sodium-dependent nutrient amino acid transporter 1 (641 aa).

Residues 1–21 show a composition bias toward polar residues; the sequence is MELKNIEQQPQLQNGNGTATE. Residues 1–37 form a disordered region; it reads MELKNIEQQPQLQNGNGTATENNEKGEQKPTEGGERT. Residues 1–38 lie on the Cytoplasmic side of the membrane; it reads MELKNIEQQPQLQNGNGTATENNEKGEQKPTEGGERTN. Residues 22-35 show a composition bias toward basic and acidic residues; sequence NNEKGEQKPTEGGE. Helical transmembrane passes span 39-59, 72-92, and 125-145; these read WGNG…LGNV, GAFL…MYYL, and TVCI…YLFV. Residues asparagine 181, asparagine 190, and asparagine 198 are each glycosylated (N-linked (GlcNAc...) asparagine). The next 9 helical transmembrane spans lie at 229-249, 258-278, 307-327, 341-361, 401-421, 441-461, 474-494, 516-536, and 552-572; these read PDWK…LVIM, AAYF…GRAV, AVVQ…MFAS, IVTT…FAIL, LFSV…IVAL, VALV…TPGG, TYVV…IYGL, CWSF…MATI, and IAGW…GIWY.

This sequence belongs to the sodium:neurotransmitter symporter (SNF) (TC 2.A.22) family.

The protein localises to the membrane. Functionally, unusual broad substrate spectrum amino acid:sodium cotransporter that promotes absorption of the D isomers of essential amino acids. Neutral amino acids are the preferred substrates, especially methionine and phenylalanine. The protein is Sodium-dependent nutrient amino acid transporter 1 of Drosophila willistoni (Fruit fly).